We begin with the raw amino-acid sequence, 333 residues long: Dihydroorotate dehydrogenase (quinone) (333 aa).

Residues A56 to K60 and T80 contribute to the FMN site. A substrate-binding site is contributed by K60. N105 to F109 provides a ligand contact to substrate. Positions 133 and 166 each coordinate FMN. Residue N166 coordinates substrate. Catalysis depends on S169, which acts as the Nucleophile. Residue N171 participates in substrate binding. Residues K211 and T239 each contribute to the FMN site. N240–T241 provides a ligand contact to substrate. FMN is bound by residues G262, G291, and Y312–S313.

This sequence belongs to the dihydroorotate dehydrogenase family. Type 2 subfamily. Monomer. It depends on FMN as a cofactor.

It localises to the cell membrane. The enzyme catalyses (S)-dihydroorotate + a quinone = orotate + a quinol. The protein operates within pyrimidine metabolism; UMP biosynthesis via de novo pathway; orotate from (S)-dihydroorotate (quinone route): step 1/1. Catalyzes the conversion of dihydroorotate to orotate with quinone as electron acceptor. In Legionella pneumophila (strain Corby), this protein is Dihydroorotate dehydrogenase (quinone).